Consider the following 593-residue polypeptide: Corrinoid activation enzyme RamQ (593 aa).

One can recognise a 2Fe-2S ferredoxin-type domain in the interval 1–76 (MRVLFPLLEE…GMEIYASREQ (76 aa)). Positions 35, 41, 44, and 60 each coordinate [2Fe-2S] cluster.

The cofactor is [2Fe-2S] cluster.

In terms of biological role, involved in the degradation of the quaternary amines L-proline betaine and L-carnitine. Component of a corrinoid-dependent methyltransferase system that transfers a methyl group from L-proline betaine or L-carnitine to tetrahydrofolate (THF), forming methyl-THF, a key intermediate in the Wood-Ljungdahl acetogenesis pathway. RamQ is not required for the methyl transfer, but it stimulates reduction of reconstituted MtqC from the Co(II) state to the Co(I) state in vitro. It also stimulates the rate of THF methylation. This is Corrinoid activation enzyme RamQ from Eubacterium limosum.